The primary structure comprises 521 residues: Cytochrome P450 1A1 (521 aa).

F229 is a substrate binding site. C463 contacts heme.

The protein belongs to the cytochrome P450 family. The cofactor is heme.

Its subcellular location is the endoplasmic reticulum membrane. The protein resides in the microsome membrane. The catalysed reaction is an organic molecule + reduced [NADPH--hemoprotein reductase] + O2 = an alcohol + oxidized [NADPH--hemoprotein reductase] + H2O + H(+). Cytochromes P450 are a group of heme-thiolate monooxygenases. They oxidize a variety of structurally unrelated compounds, including steroids, fatty acids, and xenobiotics. The polypeptide is Cytochrome P450 1A1 (cyp1a1) (Chaetodon capistratus (Four-eye butterflyfish)).